Here is a 462-residue protein sequence, read N- to C-terminus: Siroheme synthase (462 aa).

The tract at residues 1–203 is precorrin-2 dehydrogenase /sirohydrochlorin ferrochelatase; the sequence is MEYLPLFANL…GKWEHAEKEI (203 aa). NAD(+) is bound by residues 22-23 and 43-44; these read NV and DD. At Ser-128 the chain carries Phosphoserine. The tract at residues 215–462 is uroporphyrinogen-III C-methyltransferase; sequence GNVALVGAGP…NWFGKIIKEQ (248 aa). Position 224 (Pro-224) interacts with S-adenosyl-L-methionine. Asp-247 acts as the Proton acceptor in catalysis. Lys-269 functions as the Proton donor in the catalytic mechanism. Residues 300 to 302, Ile-305, 330 to 331, Met-383, and Gly-412 each bind S-adenosyl-L-methionine; these read GGD and TA.

It in the N-terminal section; belongs to the precorrin-2 dehydrogenase / sirohydrochlorin ferrochelatase family. In the C-terminal section; belongs to the precorrin methyltransferase family.

It catalyses the reaction uroporphyrinogen III + 2 S-adenosyl-L-methionine = precorrin-2 + 2 S-adenosyl-L-homocysteine + H(+). The catalysed reaction is precorrin-2 + NAD(+) = sirohydrochlorin + NADH + 2 H(+). The enzyme catalyses siroheme + 2 H(+) = sirohydrochlorin + Fe(2+). It participates in cofactor biosynthesis; adenosylcobalamin biosynthesis; precorrin-2 from uroporphyrinogen III: step 1/1. Its pathway is cofactor biosynthesis; adenosylcobalamin biosynthesis; sirohydrochlorin from precorrin-2: step 1/1. It functions in the pathway porphyrin-containing compound metabolism; siroheme biosynthesis; precorrin-2 from uroporphyrinogen III: step 1/1. The protein operates within porphyrin-containing compound metabolism; siroheme biosynthesis; siroheme from sirohydrochlorin: step 1/1. It participates in porphyrin-containing compound metabolism; siroheme biosynthesis; sirohydrochlorin from precorrin-2: step 1/1. In terms of biological role, multifunctional enzyme that catalyzes the SAM-dependent methylations of uroporphyrinogen III at position C-2 and C-7 to form precorrin-2 via precorrin-1. Then it catalyzes the NAD-dependent ring dehydrogenation of precorrin-2 to yield sirohydrochlorin. Finally, it catalyzes the ferrochelation of sirohydrochlorin to yield siroheme. The polypeptide is Siroheme synthase (Baumannia cicadellinicola subsp. Homalodisca coagulata).